Consider the following 386-residue polypeptide: Protein MGF 360-4L (386 aa).

This sequence belongs to the asfivirus MGF 360 family.

Its function is as follows. Plays a role in virus cell tropism, and may be required for efficient virus replication in macrophages. The chain is Protein MGF 360-4L from African swine fever virus (isolate Warthog/Namibia/Wart80/1980) (ASFV).